A 225-amino-acid chain; its full sequence is Ribosome maturation factor RimM (225 aa).

Positions 144 to 225 (ADEFYWVDLI…RIVVDWEADY (82 aa)) constitute a PRC barrel domain.

This sequence belongs to the RimM family. As to quaternary structure, binds ribosomal protein uS19.

It localises to the cytoplasm. Its function is as follows. An accessory protein needed during the final step in the assembly of 30S ribosomal subunit, possibly for assembly of the head region. Essential for efficient processing of 16S rRNA. May be needed both before and after RbfA during the maturation of 16S rRNA. It has affinity for free ribosomal 30S subunits but not for 70S ribosomes. This Burkholderia orbicola (strain AU 1054) protein is Ribosome maturation factor RimM.